Here is a 132-residue protein sequence, read N- to C-terminus: Small ribosomal subunit protein uS8 (132 aa).

The protein belongs to the universal ribosomal protein uS8 family. In terms of assembly, part of the 30S ribosomal subunit. Contacts proteins S5 and S12.

In terms of biological role, one of the primary rRNA binding proteins, it binds directly to 16S rRNA central domain where it helps coordinate assembly of the platform of the 30S subunit. This is Small ribosomal subunit protein uS8 from Allorhizobium ampelinum (strain ATCC BAA-846 / DSM 112012 / S4) (Agrobacterium vitis (strain S4)).